Reading from the N-terminus, the 671-residue chain is UvrABC system protein B (671 aa).

The 388-residue stretch at 25-412 (EGIDAGLAHQ…AGRVVEQVVR (388 aa)) folds into the Helicase ATP-binding domain. 38 to 45 (GVTGSGKT) serves as a coordination point for ATP. The Beta-hairpin signature appears at 91–114 (YYDYYQPEAYVPSSDTFIEKDASI). One can recognise a Helicase C-terminal domain in the interval 429-595 (QVDDLLSEIH…GVFKDVADIM (167 aa)). Residues 600 to 624 (VPGSRSKKRKGMAKAAEENARYENE) form a disordered region. A compositionally biased stretch (basic and acidic residues) spans 614-624 (AAEENARYENE). Residues 632–667 (NKRIRQLEEKMYQLARDLEFEAAAQMRDEIGKLRER) enclose the UVR domain.

Belongs to the UvrB family. As to quaternary structure, forms a heterotetramer with UvrA during the search for lesions. Interacts with UvrC in an incision complex.

It localises to the cytoplasm. In terms of biological role, the UvrABC repair system catalyzes the recognition and processing of DNA lesions. A damage recognition complex composed of 2 UvrA and 2 UvrB subunits scans DNA for abnormalities. Upon binding of the UvrA(2)B(2) complex to a putative damaged site, the DNA wraps around one UvrB monomer. DNA wrap is dependent on ATP binding by UvrB and probably causes local melting of the DNA helix, facilitating insertion of UvrB beta-hairpin between the DNA strands. Then UvrB probes one DNA strand for the presence of a lesion. If a lesion is found the UvrA subunits dissociate and the UvrB-DNA preincision complex is formed. This complex is subsequently bound by UvrC and the second UvrB is released. If no lesion is found, the DNA wraps around the other UvrB subunit that will check the other stand for damage. This is UvrABC system protein B from Pseudomonas savastanoi pv. phaseolicola (strain 1448A / Race 6) (Pseudomonas syringae pv. phaseolicola (strain 1448A / Race 6)).